The chain runs to 709 residues: Golgin-84 (709 aa).

The Cytoplasmic segment spans residues 1 to 664; that stretch reads MASWLKVAED…RATRFLWRHP (664 aa). Disordered regions lie at residues 24–132, 144–195, and 211–265; these read TELS…VVDR, EVEV…NQDA, and EVIH…DQLE. Residues 29–43 are compositionally biased toward low complexity; sequence EQSSPQPSGSSSQEG. The span at 78 to 89 shows a compositional bias: basic and acidic residues; that stretch reads PPRERIKIEKIR. Over residues 94 to 113 the composition is skewed to low complexity; it reads VDSSSVDASASKPDVSSSDV. Over residues 114–132 the composition is skewed to basic and acidic residues; it reads KGLDDDGGAEKEEKVVVDR. Residues 162–180 are compositionally biased toward low complexity; the sequence is DGAADSGNSEGAAESSAPS. Composition is skewed to basic and acidic residues over residues 211-222 and 248-265; these read EVIHEKNIKEVP and QQEHKLDSGSVKDQDQLE. The stretch at 287–592 forms a coiled coil; it reads RVCAGLSSRL…AALEFQLEKS (306 aa). Residues 665 to 684 traverse the membrane as a helical; Signal-anchor for type II membrane protein segment; that stretch reads VARVSLLFYLVFVHLFLMYL. Over 685 to 707 the chain is Lumenal; the sequence is MHRLQDFASREGPTAMGGLANSD.

It is found in the golgi apparatus membrane. In terms of biological role, may be involved in maintaining Golgi structure and in intra-Golgi transport. This chain is Golgin-84, found in Oryza sativa subsp. japonica (Rice).